We begin with the raw amino-acid sequence, 280 residues long: Transcription factor MYB46 (280 aa).

HTH myb-type domains are found at residues 15-67 and 68-122; these read VKKM…INYL and RPDL…KKRL. 2 consecutive DNA-binding regions (H-T-H motif) follow at residues 43–67 and 95–118; these read WSDVAKNAGLQRCGKSCRLRWINYL and WSQIAARLPGRTDNEIKNFWNSTI. The disordered stretch occupies residues 129 to 150; that stretch reads SNLINNSSSSPNTASDSSSNSA.

Expressed at low levels in stems and siliques, specifically in xylem.

The protein resides in the nucleus. In terms of biological role, transcription activator. Involved in the regulation of secondary wall biosynthesis in fibers and vessels. Transcription activator of the mannan synthase CSLA9 that recognizes and binds to the DNA consensus sequence 5'-[AG][GT]T[AT]GGT[GA]-3' cis-regulatory element of CSLA9 promoter. Transcription factor that acts as a molecular switch in the NAC012/SND1-mediated transcriptional network regulating secondary wall biosynthesis. Is directly activated by NAC012/SND1. Functions redundantly with MYB83 in the transcriptional regulatory cascade leading to secondary wall formation in fibers and vessels. Transcription activator that binds to the DNA consensus sequence 5'-ACC[AT]A[AC][TC]-3', designated as the secondary wall MYB-responsive element (SMRE). Regulates directly numerous transcription factors and a number of genes involved in secondary wall biosynthesis that contain SMRE elements in their promoters. Is an obligate component of the transcriptional regulatory complex toward the commitment of secondary wall cellulose synthesis. Is required for functional expression of the three secondary wall CESA genes, CESA4, CESA7 and CESA8. The polypeptide is Transcription factor MYB46 (Arabidopsis thaliana (Mouse-ear cress)).